A 28-amino-acid polypeptide reads, in one-letter code: Dolichyl-diphosphooligosaccharide--protein glycosyltransferase subunit 1 (28 aa).

It belongs to the OST1 family. As to quaternary structure, component of the oligosaccharyltransferase (OST) complex.

It localises to the endoplasmic reticulum membrane. It participates in protein modification; protein glycosylation. Its function is as follows. Subunit of the oligosaccharyl transferase (OST) complex that catalyzes the initial transfer of a defined glycan (Glc(3)Man(9)GlcNAc(2) in eukaryotes) from the lipid carrier dolichol-pyrophosphate to an asparagine residue within an Asn-X-Ser/Thr consensus motif in nascent polypeptide chains, the first step in protein N-glycosylation. N-glycosylation occurs cotranslationally and the complex associates with the Sec61 complex at the channel-forming translocon complex that mediates protein translocation across the endoplasmic reticulum (ER). All subunits are required for a maximal enzyme activity. This Gallus gallus (Chicken) protein is Dolichyl-diphosphooligosaccharide--protein glycosyltransferase subunit 1.